A 101-amino-acid polypeptide reads, in one-letter code: Small ribosomal subunit protein uS14 (101 aa).

The segment at 1–21 is disordered; sequence MAKVSLIKKNESRKKKSQSLH. A compositionally biased stretch (basic residues) spans 11-21; the sequence is ESRKKKSQSLH.

The protein belongs to the universal ribosomal protein uS14 family. In terms of assembly, part of the 30S ribosomal subunit. Contacts proteins S3 and S10.

In terms of biological role, binds 16S rRNA, required for the assembly of 30S particles and may also be responsible for determining the conformation of the 16S rRNA at the A site. The sequence is that of Small ribosomal subunit protein uS14 from Rickettsia canadensis (strain McKiel).